A 536-amino-acid chain; its full sequence is CBS domain-containing protein CBSCBSPB2 (536 aa).

Residues 1–23 are compositionally biased toward low complexity; it reads MTTTPTSSGRRSISSIRRTSSAS. Residues 1 to 60 are disordered; sequence MTTTPTSSGRRSISSIRRTSSASKKPVLQSEESESGSGSINENTSKPDSPLAQPVSDGER. 4 CBS domains span residues 66-124, 132-187, 228-287, and 295-354; these read RLSK…LRPE, MTRN…RMEK, VTEN…LSPE, and MTPN…NNSS. The PB1 domain occupies 406–489; sequence VSSFAFKFED…KVLRLHLDFT (84 aa). A helical membrane pass occupies residues 509–529; sequence VWWQTGVLAGAIVLTSIGLFV.

The protein localises to the membrane. The polypeptide is CBS domain-containing protein CBSCBSPB2 (CBSCBSPB2) (Arabidopsis thaliana (Mouse-ear cress)).